The primary structure comprises 836 residues: Glutamate receptor ionotropic, kainate 1 (836 aa).

Positions 1–30 (MERGTVLIQPGLWTRDTSWTLLYFLCYILP) are cleaved as a signal peptide. The Extracellular segment spans residues 31–561 (QTSPQVLRIG…VFSFLNPLSP (531 aa)). N-linked (GlcNAc...) asparagine glycosylation is found at asparagine 68, asparagine 74, asparagine 276, asparagine 379, asparagine 413, asparagine 424, and asparagine 431. L-glutamate contacts are provided by proline 516, threonine 518, and arginine 523. Asparagine 546 is a glycosylation site (N-linked (GlcNAc...) asparagine). The chain crosses the membrane as a helical span at residues 562–582 (DIWMYVLLACLGVSCVLFVIA). Residues 583 to 638 (RFTPYEWYNPHPCNPDSDVVENNFTLLNSFWFGVGALMQQGSELMPKALSTRIVGG) are Cytoplasmic-facing. Residues 639 to 659 (IWWFFTLIIISSYTANLAAFL) traverse the membrane as a helical segment. The Extracellular portion of the chain corresponds to 660–721 (TVERMESPID…RQPSALGVEN (62 aa)). The L-glutamate site is built by serine 689 and threonine 690. The chain crosses the membrane as a helical span at residues 722-742 (IGGIFIVLAAGLVLSVFVAIG). Topologically, residues 743–836 (EFIYKSRKNN…RRTQRKETVA (94 aa)) are cytoplasmic.

This sequence belongs to the glutamate-gated ion channel (TC 1.A.10.1) family. GRIK1 subfamily. In terms of assembly, homotetramer or heterotetramer of pore-forming glutamate receptor subunits. Tetramers may be formed by the dimerization of dimers. Can form functional heteromeric receptors with GRIK4 and GRIK5. Interacts with KLHL17. In terms of tissue distribution, most abundant in the cerebellum. Also present in the suprachiasmatic nuclei of the hypothalamus.

It localises to the cell membrane. It is found in the postsynaptic cell membrane. The enzyme catalyses Ca(2+)(in) = Ca(2+)(out). In terms of biological role, ionotropic glutamate receptor that functions as a cation-permeable ligand-gated ion channel, gated by L-glutamate and the glutamatergic agonist kainic acid. L-glutamate acts as an excitatory neurotransmitter at many synapses in the central nervous system. Binding of the excitatory neurotransmitter L-glutamate induces a conformation change, leading to the opening of the cation channel, and thereby converts the chemical signal to an electrical impulse. The receptor then desensitizes rapidly and enters a transient inactive state, characterized by the presence of bound agonist. The protein is Glutamate receptor ionotropic, kainate 1 (Grik1) of Mus musculus (Mouse).